Reading from the N-terminus, the 159-residue chain is Protein Smg homolog (159 aa).

This sequence belongs to the Smg family.

This chain is Protein Smg homolog, found in Nitrosococcus oceani (strain ATCC 19707 / BCRC 17464 / JCM 30415 / NCIMB 11848 / C-107).